We begin with the raw amino-acid sequence, 269 residues long: Troponin I (269 aa).

Positions 1–104 (MADDEKKAAA…AKKGFMTPER (104 aa)) are disordered. A2 carries the N-acetylalanine modification. A compositionally biased stretch (low complexity) spans 9-50 (AAPAAAPAAAAKPAAPAAAPAANGKAAPAANGKAAPAAAAAP). Residues 56-91 (DPNDPKVKAEEAKKAKQAEIERKRAEVRKRMEEASK) show a composition bias toward basic and acidic residues. The interval 162–171 (ERMYICEGQK) is troponin T-interaction. Residues 189–202 (NAQVNDLRGKFVKP) form an actin-binding region. 2 positions are modified to N6,N6,N6-trimethyllysine: K201 and K205. The tract at residues 239–269 (TLEEEEKEKKPDWSKGKPGDAKVKEEVEAEA) is disordered.

Belongs to the troponin I family. Binds to actin and tropomyosin. All isoforms are expressed in somatic muscle. Isoforms containing exon 6a1 (isoforms 1 and 2) are expressed in all muscles but highest expression is in abdominal muscle and splanchnic muscle of the gut. Isoforms containing exon 6b1 (isoforms 5, 6, 9 and 10) are highly expressed in the tergal depressor of trochanter (TDT) muscle.

In terms of biological role, troponin I is the ATPase inhibitory subunit of troponin in the thin filament regulatory complex. Involved in the development and maintenance of muscle and nervous system. May also be involved in the cytoskeletal apparatus. The chain is Troponin I (wupA) from Drosophila melanogaster (Fruit fly).